Consider the following 281-residue polypeptide: NADPH-dependent 7-cyano-7-deazaguanine reductase (281 aa).

Position 87-89 (87-89 (VES)) interacts with substrate. Residue 89 to 90 (SK) participates in NADPH binding. Cys188 functions as the Thioimide intermediate in the catalytic mechanism. The active-site Proton donor is the Asp195. 227-228 (HE) lines the substrate pocket. NADPH is bound at residue 256 to 257 (RG).

It belongs to the GTP cyclohydrolase I family. QueF type 2 subfamily. As to quaternary structure, homodimer.

The protein localises to the cytoplasm. The enzyme catalyses 7-aminomethyl-7-carbaguanine + 2 NADP(+) = 7-cyano-7-deazaguanine + 2 NADPH + 3 H(+). It participates in tRNA modification; tRNA-queuosine biosynthesis. Catalyzes the NADPH-dependent reduction of 7-cyano-7-deazaguanine (preQ0) to 7-aminomethyl-7-deazaguanine (preQ1). The protein is NADPH-dependent 7-cyano-7-deazaguanine reductase of Aliivibrio fischeri (strain ATCC 700601 / ES114) (Vibrio fischeri).